The following is a 433-amino-acid chain: Divalent metal cation transporter MntH (433 aa).

Helical transmembrane passes span 32–52 (LIFA…GNFA), 62–82 (GYDL…FQGL), 101–121 (TLPP…AMAT), 131–151 (IGIA…TGIV), 168–188 (LVIG…LLIV), 209–229 (ALTI…LFLH), 256–276 (VLAA…MAAG), 296–316 (SPLL…ASGV), 345–365 (ALTM…TRAL), 366–386 (VLSQ…LLWF), and 401–421 (ITAI…VILL).

The protein belongs to the NRAMP family.

It is found in the cell inner membrane. H(+)-stimulated, divalent metal cation uptake system. This chain is Divalent metal cation transporter MntH, found in Acidiphilium cryptum (strain JF-5).